Consider the following 384-residue polypeptide: Cell division protein FtsZ (384 aa).

Residues 20-24, 107-109, E138, R142, and N186 each bind GTP; these read GGGGN and GTG.

Belongs to the FtsZ family. As to quaternary structure, homodimer. Polymerizes to form a dynamic ring structure in a strictly GTP-dependent manner. Interacts directly with several other division proteins.

It localises to the cytoplasm. Its function is as follows. Essential cell division protein that forms a contractile ring structure (Z ring) at the future cell division site. The regulation of the ring assembly controls the timing and the location of cell division. One of the functions of the FtsZ ring is to recruit other cell division proteins to the septum to produce a new cell wall between the dividing cells. Binds GTP and shows GTPase activity. The protein is Cell division protein FtsZ of Wigglesworthia glossinidia brevipalpis.